Consider the following 78-residue polypeptide: Serine rich endogenous peptide 12 (78 aa).

The N-terminal stretch at Met-1–Cys-24 is a signal peptide. A propeptide spans Arg-25–Arg-43 (removed in mature form). Residues Ser-47–Tyr-78 are disordered. Residues Ser-50 to Arg-64 carry the SCOOP motif motif. Positions Ser-56–Ser-58 match the SxS motif essential for MIK2 binding motif.

Belongs to the serine rich endogenous peptide (SCOOP) phytocytokine family. Interacts with MIK2 (via extracellular leucine-rich repeat domain); this interaction triggers the formation of complex between MIK2 and the BAK1/SERK3 and SERK4 coreceptors, and subsequent BAK1 activation by phosphorylation on 'Ser-612'. Mostly expressed in the whole root system, and, to a lower extent, in seedlings shoots.

It localises to the cell membrane. It is found in the secreted. The protein localises to the extracellular space. The protein resides in the apoplast. Its function is as follows. Brassicaceae-specific phytocytokine (plant endogenous peptide released into the apoplast) perceived by MIK2 in a BAK1/SERK3 and SERK4 coreceptors-dependent manner, that modulates various physiological and antimicrobial processes including root growth prevention, phospholipid signaling pathway activation (e.g. accumulation of phosphatidic acid (PA), but transient reduction of phosphatidylinositol 4,5-bisphosphate (PIP(2)) levels) and reactive oxygen species (ROS) response regulation. Moderates primary root growth, and regulates root meristems and cell elongation; this root growth regulation is associated with the modulation of ROS metabolism and alteration of cell wall structure, and depends on variations in many genes expression. Promotes ROS (e.g. superoxide anion O(2) and hydrogen peroxide H(2)O(2)) production and MAPK (e.g. MPK3, MPK4 and MPK6) activation in a MIK2-dependent manner, thus leading to the up-regulation of immune-related marker genes (e.g. WRKY30, WRKY33 and CYP81F2). Involved in biotic and oxidative stress responses; acts as a negative regulator of defense against necrotrophic pathogens such as the bacteria Erwinia amylovora and the fungus Alternaria brassicicola. Able to prime defense responses against the pathogenic bacteria Pseudomonas syringae pv. tomato DC3000. Contributes to the triggering of defense responses toward generalist herbivores such as Spodoptera littoralis, probably via the activation of jasmonate and indole glucosinolate biosynthesis. Triggers the expression of several PROSCOOP genes (e.g. PROSCOOP3, PROSCOOP7, PROSCOOP12 and PROSCOOP13). The protein is Serine rich endogenous peptide 12 of Arabidopsis thaliana (Mouse-ear cress).